We begin with the raw amino-acid sequence, 241 residues long: Ribosome-recycling factor, mitochondrial (241 aa).

The protein belongs to the RRF family.

It is found in the mitochondrion. Necessary for protein synthesis in mitochondria. Functions as a ribosome recycling factor in mitochondria. This is Ribosome-recycling factor, mitochondrial (RRF1) from Kluyveromyces lactis (strain ATCC 8585 / CBS 2359 / DSM 70799 / NBRC 1267 / NRRL Y-1140 / WM37) (Yeast).